We begin with the raw amino-acid sequence, 136 residues long: UPF0216 protein PF0452 (136 aa).

Belongs to the UPF0216 family.

The protein is UPF0216 protein PF0452 of Pyrococcus furiosus (strain ATCC 43587 / DSM 3638 / JCM 8422 / Vc1).